Consider the following 525-residue polypeptide: MEPEPEPGSVEVPAGRVLSASELRAARSRSQKLPQRSHGPKDFLPDGSEAQAERLRLCRQELWQLLAEERVERLGSLVAAEWKPEEGFVELTSPAGKFWQTMGYSEEGRQRLHPEEALYLLECGSIQLFYQDLPLSIQEAYQLLLTEDTLSFLQYQVFSHLKRLGYVVRRFQLSSVVSPYERQLNLDGYAQCLEDGSGKRKRSSSCRSVNKKPKVLQNSLPPVSLAASSSPACDQSSQYPEEKSQDSSPRQGSELPLQFLGSSEPCSDLAREDVGCDRESHKIENGAKGTPKLRWNFEQISFPNMASDSRHTFLPAPAPELLPANVIGRGTDAESWCQKLNQRREKLSRRDREQQAVVQQFREDVNADPEVRGCSSWQEYKELLQRRQTQKSQPRPPHLWGQSVTPLLDPDKADCPAAVLQHISVLQTTHLADGGYRLLEKSGGLQISFDVYQADAVATFRKNSPGKPYVRMCISGFDDPVPDLCSLKCLTYQSGDVPLIFALVDHGDISFYSFRDFTLPRDLGH.

At M1 the chain carries N-acetylmethionine. The interval 1–46 (MEPEPEPGSVEVPAGRVLSASELRAARSRSQKLPQRSHGPKDFLPD) is disordered. Low complexity predominate over residues 7–23 (PGSVEVPAGRVLSASEL). At S178 the chain carries Phosphoserine. Residue Y180 is modified to Phosphotyrosine. Over residues 220–232 (LPPVSLAASSSPA) the composition is skewed to low complexity. A disordered region spans residues 220–273 (LPPVSLAASSSPACDQSSQYPEEKSQDSSPRQGSELPLQFLGSSEPCSDLARED).

Belongs to the SEN54 family. TRNA splicing endonuclease is a heterotetramer composed of TSEN2, TSEN15, TSEN34/LENG5 and TSEN54. tRNA splicing endonuclease complex also contains proteins of the pre-mRNA 3'-end processing machinery such as CLP1, CPSF1, CPSF4 and CSTF2.

It localises to the nucleus. It is found in the nucleolus. Functionally, non-catalytic subunit of the tRNA-splicing endonuclease complex, a complex responsible for identification and cleavage of the splice sites in pre-tRNA. It cleaves pre-tRNA at the 5' and 3' splice sites to release the intron. The products are an intron and two tRNA half-molecules bearing 2',3' cyclic phosphate and 5'-OH termini. There are no conserved sequences at the splice sites, but the intron is invariably located at the same site in the gene, placing the splice sites an invariant distance from the constant structural features of the tRNA body. The tRNA splicing endonuclease is also involved in mRNA processing via its association with pre-mRNA 3'-end processing factors, establishing a link between pre-tRNA splicing and pre-mRNA 3'-end formation, suggesting that the endonuclease subunits function in multiple RNA-processing events. This Mus musculus (Mouse) protein is tRNA-splicing endonuclease subunit Sen54 (Tsen54).